Here is a 401-residue protein sequence, read N- to C-terminus: Mu-type opioid receptor (401 aa).

The Extracellular portion of the chain corresponds to methionine 1–isoleucine 69. N-linked (GlcNAc...) asparagine glycosylation is found at asparagine 9, asparagine 12, asparagine 34, asparagine 41, and asparagine 49. Residues threonine 70–tyrosine 94 traverse the membrane as a helical segment. The Cytoplasmic segment spans residues valine 95–asparagine 107. The chain crosses the membrane as a helical span at residues isoleucine 108 to leucine 132. Topologically, residues methionine 133 to cysteine 143 are extracellular. Cysteine 143 and cysteine 220 form a disulfide bridge. A helical transmembrane segment spans residues lysine 144–valine 166. The Cytoplasmic segment spans residues aspartate 167 to asparagine 186. Tyrosine 169 bears the Phosphotyrosine mark. Residues alanine 187–methionine 208 form a helical membrane-spanning segment. Over alanine 209 to tryptophan 231 the chain is Extracellular. A helical membrane pass occupies residues glutamate 232–glycine 256. The Cytoplasmic segment spans residues leucine 257 to arginine 280. A helical transmembrane segment spans residues isoleucine 281–alanine 307. Residues leucine 308 to threonine 315 lie on the Extracellular side of the membrane. Residues phenylalanine 316–tyrosine 339 traverse the membrane as a helical segment. Residues asparagine 335–tyrosine 339 carry the NPxxY; plays a role in stabilizing the activated conformation of the receptor motif. At alanine 340 to proline 401 the chain is on the cytoplasmic side. Cysteine 354 carries the S-palmitoyl cysteine lipid modification. Residues asparagine 365–histidine 388 form a disordered region. Residue serine 366 is modified to Phosphoserine. Threonine 373 carries the post-translational modification Phosphothreonine. Residue serine 378 is modified to Phosphoserine. Residue threonine 397 is modified to Phosphothreonine.

The protein belongs to the G-protein coupled receptor 1 family. Forms homooligomers and heterooligomers with other GPCRs, such as OPRD1, OPRK1, OPRL1, NPFFR2, ADRA2A, SSTR2, CNR1 and CCR5 (probably in dimeric forms). Interacts with heterotrimeric G proteins; interaction with a heterotrimeric complex containing GNAI1, GNB1 and GNG2 stabilizes the active conformation of the receptor and increases its affinity for endomorphin-2, the synthetic opioid peptide DAMGO and for morphinan agonists. Interacts with PPL; the interaction disrupts agonist-mediated G-protein activation. Interacts (via C-terminus) with DNAJB4 (via C-terminus). Interacts with calmodulin; the interaction inhibits the constitutive activity of OPRM1; it abolishes basal and attenuates agonist-stimulated G-protein coupling. Interacts with FLNA, PLD2, RANBP9 and WLS and GPM6A. Interacts with RTP4. Interacts with SYP and GNAS. Interacts with RGS9, RGS17, RGS20, RGS4, PPP1R9B and HINT1. In terms of processing, phosphorylated. Differentially phosphorylated in basal and agonist-induced conditions. Agonist-mediated phosphorylation modulates receptor internalization. Phosphorylated by GRK2 in a agonist-dependent manner. Phosphorylation at Tyr-169 requires receptor activation, is dependent on non-receptor protein tyrosine kinase Src and results in a decrease in agonist efficacy by reducing G-protein coupling efficiency. Phosphorylated on tyrosine residues; the phosphorylation is involved in agonist-induced G-protein-independent receptor down-regulation. Phosphorylation at Ser-378 is involved in G-protein-dependent but not beta-arrestin-dependent activation of the ERK pathway. Ubiquitinated. A basal ubiquitination seems not to be related to degradation. Ubiquitination is increased upon formation of OPRM1:OPRD1 oligomers leading to proteasomal degradation; the ubiquitination is diminished by RTP4.

The protein resides in the cell membrane. Its subcellular location is the cell projection. The protein localises to the axon. It is found in the perikaryon. It localises to the dendrite. The protein resides in the endosome. Receptor for endogenous opioids such as beta-endorphin and endomorphin. Receptor for natural and synthetic opioids including morphine, heroin, DAMGO, fentanyl, etorphine, buprenorphin and methadone. Also activated by enkephalin peptides, such as Met-enkephalin or Met-enkephalin-Arg-Phe, with higher affinity for Met-enkephalin-Arg-Phe. Agonist binding to the receptor induces coupling to an inactive GDP-bound heterotrimeric G-protein complex and subsequent exchange of GDP for GTP in the G-protein alpha subunit leading to dissociation of the G-protein complex with the free GTP-bound G-protein alpha and the G-protein beta-gamma dimer activating downstream cellular effectors. The agonist- and cell type-specific activity is predominantly coupled to pertussis toxin-sensitive G(i) and G(o) G alpha proteins, GNAI1, GNAI2, GNAI3 and GNAO1, and to a lesser extent to pertussis toxin-insensitive G alpha proteins GNAZ and GNA15. They mediate an array of downstream cellular responses, including inhibition of adenylate cyclase activity and both N-type and L-type calcium channels, activation of inward rectifying potassium channels, mitogen-activated protein kinase (MAPK), phospholipase C (PLC), phosphoinositide/protein kinase (PKC), phosphoinositide 3-kinase (PI3K) and regulation of NF-kappa-B. Also couples to adenylate cyclase stimulatory G alpha proteins. The selective temporal coupling to G-proteins and subsequent signaling can be regulated by RGSZ proteins, such as RGS9, RGS17 and RGS4. Phosphorylation by members of the GPRK subfamily of Ser/Thr protein kinases and association with beta-arrestins is involved in short-term receptor desensitization. Beta-arrestins associate with the GPRK-phosphorylated receptor and uncouple it from the G-protein thus terminating signal transduction. The phosphorylated receptor is internalized through endocytosis via clathrin-coated pits which involves beta-arrestins. The activation of the ERK pathway occurs either in a G-protein-dependent or a beta-arrestin-dependent manner and is regulated by agonist-specific receptor phosphorylation. Acts as a class A G-protein coupled receptor (GPCR) which dissociates from beta-arrestin at or near the plasma membrane and undergoes rapid recycling. Receptor down-regulation pathways are varying with the agonist and occur dependent or independent of G-protein coupling. Endogenous ligands induce rapid desensitization, endocytosis and recycling. Heterooligomerization with other GPCRs can modulate agonist binding, signaling and trafficking properties. Involved in neurogenesis. The polypeptide is Mu-type opioid receptor (OPRM1) (Pan troglodytes (Chimpanzee)).